A 361-amino-acid polypeptide reads, in one-letter code: D-alanine--D-alanine ligase (361 aa).

The 211-residue stretch at K134 to D344 folds into the ATP-grasp domain. Residue K167–E222 coordinates ATP. The Mg(2+) site is built by D297, E311, and N313.

Belongs to the D-alanine--D-alanine ligase family. Mg(2+) serves as cofactor. The cofactor is Mn(2+).

Its subcellular location is the cytoplasm. It catalyses the reaction 2 D-alanine + ATP = D-alanyl-D-alanine + ADP + phosphate + H(+). It functions in the pathway cell wall biogenesis; peptidoglycan biosynthesis. In terms of biological role, cell wall formation. This chain is D-alanine--D-alanine ligase, found in Borreliella burgdorferi (strain ZS7) (Borrelia burgdorferi).